The chain runs to 72 residues: Translation initiation factor IF-1 (72 aa).

One can recognise an S1-like domain in the interval 1-72; that stretch reads MSKDDVIEMQ…TRGRITWRAK (72 aa).

It belongs to the IF-1 family. In terms of assembly, component of the 30S ribosomal translation pre-initiation complex which assembles on the 30S ribosome in the order IF-2 and IF-3, IF-1 and N-formylmethionyl-tRNA(fMet); mRNA recruitment can occur at any time during PIC assembly.

It localises to the cytoplasm. One of the essential components for the initiation of protein synthesis. Stabilizes the binding of IF-2 and IF-3 on the 30S subunit to which N-formylmethionyl-tRNA(fMet) subsequently binds. Helps modulate mRNA selection, yielding the 30S pre-initiation complex (PIC). Upon addition of the 50S ribosomal subunit IF-1, IF-2 and IF-3 are released leaving the mature 70S translation initiation complex. In Clostridium beijerinckii (strain ATCC 51743 / NCIMB 8052) (Clostridium acetobutylicum), this protein is Translation initiation factor IF-1.